A 254-amino-acid polypeptide reads, in one-letter code: Cyclin homolog (254 aa).

It belongs to the cyclin family. Cyclin D subfamily.

Its function is as follows. May be highly relevant to the process of cellular transformation and rapid T-cell proliferation effected by HVS during latent infections of T-cells in susceptible hosts. The chain is Cyclin homolog (72) from Saimiriine herpesvirus 2 (strain 11) (SaHV-2).